A 621-amino-acid chain; its full sequence is SH2B adapter protein 2 (621 aa).

Phosphotyrosine is present on Y47. Phosphoserine is present on S130. The segment at 143-166 (RRSSPEPDGGATPKAAEPASEPRD) is disordered. The 114-residue stretch at 186–299 (DIQREGALRF…WVADIQGCVD (114 aa)) folds into the PH domain. A Phosphoserine modification is found at S303. The SH2 domain maps to 409-507 (WFHGTLSRVK…SADITLRSYV (99 aa)). Disordered regions lie at residues 507-528 (VRAQGPPPDPGPAPNTAAPVPA) and 549-611 (PASP…LGRA). Low complexity predominate over residues 552-571 (PSNGAGASSSSGSSSSATSL). Phosphoserine is present on S597. Position 618 is a phosphotyrosine (Y618).

The protein belongs to the SH2B adapter family. Homodimer. Interacts with KIT/c-KIT, SHC1, EPOR, PDGFR, VAV1 and VAV3. Interacts (via N-terminal region) with SHC1. Interacts (via the phosphorylated C-terminus) with GRB2. Interacts (via its SH2 domain) with EPOR, INSR and KIT. Interacts with GRB2 after B-cell antigen receptor stimulation. Interacts (via PH domain) with VAV3. Interacts with NTRK1, NTRK2 and NTRK3 (phosphorylated); after stimulation of the receptor by its extracellular ligand and subsequent autophosphorylation of the receptor. Binds INSR, GRB2, ASB6 and CAP. Insulin stimulation leads to dissociation of CAP. Binds CBS only when SH2B2/APS has become phosphorylated. INSR binding does not depend on the phosphorylation of SH2B2/APS. Post-translationally, tyrosine phosphorylated by JAK2, KIT and other kinases activated by B-cell receptor in response to stimulation with cytokines, IL3, IL5, PDGF, IGF1, IGF2, CSF2/GM-CSF and cross-linking of the B-cell receptor complex. In terms of tissue distribution, strongly expressed in brain; also expressed in spleen, kidney and skeletal muscle, and at low levels in small intestine and bone marrow. Strongly expressed in B-cell lines, but not T-cell lines. Also expressed in myeloid and fibroblast cell lines.

Its subcellular location is the cytoplasm. The protein resides in the cell membrane. Its function is as follows. Adapter protein for several members of the tyrosine kinase receptor family. Involved in multiple signaling pathways. May be involved in coupling from immunoreceptor to Ras signaling. Acts as a negative regulator of cytokine signaling in collaboration with CBL. Binds to EPOR and suppresses EPO-induced STAT5 activation, possibly through a masking effect on STAT5 docking sites in EPOR. Suppresses PDGF-induced mitogenesis. May induce cytoskeletal reorganization via interaction with VAV3. The chain is SH2B adapter protein 2 (Sh2b2) from Mus musculus (Mouse).